We begin with the raw amino-acid sequence, 485 residues long: Regulatory protein ViaA (485 aa).

The protein belongs to the ViaA family. In terms of assembly, homodimer. Interacts with RavA.

The protein resides in the cytoplasm. Component of the RavA-ViaA chaperone complex, which may act on the membrane to optimize the function of some of the respiratory chains. ViaA stimulates the ATPase activity of RavA. The polypeptide is Regulatory protein ViaA (Photorhabdus laumondii subsp. laumondii (strain DSM 15139 / CIP 105565 / TT01) (Photorhabdus luminescens subsp. laumondii)).